Consider the following 517-residue polypeptide: 2-isopropylmalate synthase (517 aa).

One can recognise a Pyruvate carboxyltransferase domain in the interval 7–269 (VIIFDTTLRD…ETGIDTTQIV (263 aa)). Mn(2+)-binding residues include aspartate 16, histidine 204, histidine 206, and asparagine 240. Residues 395–517 (KFISQKISTE…KPKAQGSGTI (123 aa)) form a regulatory domain region.

Belongs to the alpha-IPM synthase/homocitrate synthase family. LeuA type 1 subfamily. As to quaternary structure, homodimer. It depends on Mn(2+) as a cofactor.

The protein resides in the cytoplasm. The catalysed reaction is 3-methyl-2-oxobutanoate + acetyl-CoA + H2O = (2S)-2-isopropylmalate + CoA + H(+). It functions in the pathway amino-acid biosynthesis; L-leucine biosynthesis; L-leucine from 3-methyl-2-oxobutanoate: step 1/4. Functionally, catalyzes the condensation of the acetyl group of acetyl-CoA with 3-methyl-2-oxobutanoate (2-ketoisovalerate) to form 3-carboxy-3-hydroxy-4-methylpentanoate (2-isopropylmalate). This chain is 2-isopropylmalate synthase, found in Neisseria meningitidis serogroup A / serotype 4A (strain DSM 15465 / Z2491).